The sequence spans 295 residues: Aspartate carbamoyltransferase catalytic subunit (295 aa).

Arg49 and Thr50 together coordinate carbamoyl phosphate. Residue Lys77 coordinates L-aspartate. Arg99, His127, and Gln130 together coordinate carbamoyl phosphate. L-aspartate contacts are provided by Arg161 and Arg212. The carbamoyl phosphate site is built by Gly251 and Pro252.

It belongs to the aspartate/ornithine carbamoyltransferase superfamily. ATCase family. Heterododecamer (2C3:3R2) of six catalytic PyrB chains organized as two trimers (C3), and six regulatory PyrI chains organized as three dimers (R2).

The catalysed reaction is carbamoyl phosphate + L-aspartate = N-carbamoyl-L-aspartate + phosphate + H(+). It functions in the pathway pyrimidine metabolism; UMP biosynthesis via de novo pathway; (S)-dihydroorotate from bicarbonate: step 2/3. Catalyzes the condensation of carbamoyl phosphate and aspartate to form carbamoyl aspartate and inorganic phosphate, the committed step in the de novo pyrimidine nucleotide biosynthesis pathway. The protein is Aspartate carbamoyltransferase catalytic subunit of Campylobacter jejuni subsp. jejuni serotype O:2 (strain ATCC 700819 / NCTC 11168).